Reading from the N-terminus, the 192-residue chain is Ribosome maturation factor RimP (192 aa).

This sequence belongs to the RimP family.

It localises to the cytoplasm. In terms of biological role, required for maturation of 30S ribosomal subunits. The chain is Ribosome maturation factor RimP from Mycobacterium sp. (strain JLS).